Consider the following 150-residue polypeptide: Early 4 ORF6/7 control protein (150 aa).

A disordered region spans residues 1–31 (MTTSGVPFGMTLRPTRSRLSRRTPYSRDRLP). Positions 1–58 (MTTSGVPFGMTLRPTRSRLSRRTPYSRDRLPPFETETRATILEDHPLLPECNTLTMHN) match the Nuclear localization signal motif.

The protein belongs to the adenoviridae E4-orf6/7 family. Interacts with host E2F proteins.

It is found in the host nucleus. Its function is as follows. Modulates viral and host transcriptional activity to promote viral genome replication. Stimulates viral E2a promoter activity by binding and inducing dimerization of host E2F. During viral infection E1A protein binds to cellular retinablastoma (RB) family members and dissociates these repressors from a complex with E2F proteins. Free E2F is then bound to E4orf6/7 which leads to transactivation of viral E2 promoter, and cellular promoters such as E2F-1 promoter. Activation of cellular E2F targets promote cell cycle S phase and thereby possibly favorises viral DNA replication process. This Human adenovirus C serotype 2 (HAdV-2) protein is Early 4 ORF6/7 control protein.